A 548-amino-acid chain; its full sequence is Membrane protein insertase YidC (548 aa).

Residues 6–26 form a helical membrane-spanning segment; the sequence is NLLVIALLFVSFMIWQAWEQD. Positions 28–56 are disordered; that stretch reads NPQPQTQQTTQTTTTAAGSAADQGVPASG. Residues 29–42 are compositionally biased toward low complexity; it reads PQPQTQQTTQTTTT. Helical transmembrane passes span 350–370, 424–444, 458–478, and 499–519; these read FVGNWGFSIIIITFIVRGIMY, FPLIIQMPIFLALYYMLMGSI, LSAQDPYYILPILMGVTMFFI, and PVIFTVFFLWFPSGLVLYYIV.

Belongs to the OXA1/ALB3/YidC family. Type 1 subfamily. In terms of assembly, interacts with the Sec translocase complex via SecD. Specifically interacts with transmembrane segments of nascent integral membrane proteins during membrane integration.

It localises to the cell inner membrane. Functionally, required for the insertion and/or proper folding and/or complex formation of integral membrane proteins into the membrane. Involved in integration of membrane proteins that insert both dependently and independently of the Sec translocase complex, as well as at least some lipoproteins. Aids folding of multispanning membrane proteins. In Salmonella heidelberg (strain SL476), this protein is Membrane protein insertase YidC.